We begin with the raw amino-acid sequence, 522 residues long: BTB/POZ domain-containing protein 3 (522 aa).

Residues 120 to 190 (ADVHFVVGPP…IYCDEIDLAA (71 aa)) form the BTB domain. The BACK domain maps to 235–300 (FEEPDLTQRC…NWAEVECQRQ (66 aa)).

In terms of tissue distribution, strongly expressed in the primary visual cortex.

The protein localises to the cytoplasm. The protein resides in the cytosol. It localises to the nucleus. Its function is as follows. Acts as a key regulator of dendritic field orientation during development of sensory cortex. Also directs dendrites toward active axon terminals when ectopically expressed. The protein is BTB/POZ domain-containing protein 3 (BTBD3) of Callithrix jacchus (White-tufted-ear marmoset).